An 808-amino-acid chain; its full sequence is Ribosome biogenesis protein BOP1 homolog (808 aa).

2 stretches are compositionally biased toward low complexity: residues 1-25 (MTSP…LTPC) and 33-50 (ATSS…SSFD). The interval 1 to 55 (MTSPKGKPSPKRSAPAPATAALTPCAEERTEGATSSASASASSHISSSFDSPRDD) is disordered. 5 WD repeats span residues 430-469 (GHTA…LMKR), 640-680 (KFSE…RRFK), 682-720 (SGGV…KPYK), 724-766 (SHKG…DYNK), and 777-808 (KHQR…AWTE).

This sequence belongs to the WD repeat BOP1/ERB1 family.

The protein localises to the nucleus. The protein resides in the nucleolus. It is found in the nucleoplasm. Functionally, required for maturation of ribosomal RNAs and formation of the large ribosomal subunit. The sequence is that of Ribosome biogenesis protein BOP1 homolog from Leishmania major.